The chain runs to 218 residues: 3,4-dihydroxy-2-butanone 4-phosphate synthase (218 aa).

D-ribulose 5-phosphate-binding positions include 37–38, aspartate 42, 150–154, and glutamate 174; these read RE and RSGHT. Glutamate 38 serves as a coordination point for Mg(2+). Mg(2+) is bound at residue histidine 153.

It belongs to the DHBP synthase family. In terms of assembly, homodimer. The cofactor is Mg(2+). Mn(2+) serves as cofactor.

It carries out the reaction D-ribulose 5-phosphate = (2S)-2-hydroxy-3-oxobutyl phosphate + formate + H(+). It participates in cofactor biosynthesis; riboflavin biosynthesis; 2-hydroxy-3-oxobutyl phosphate from D-ribulose 5-phosphate: step 1/1. Its function is as follows. Catalyzes the conversion of D-ribulose 5-phosphate to formate and 3,4-dihydroxy-2-butanone 4-phosphate. This Hamiltonella defensa subsp. Acyrthosiphon pisum (strain 5AT) protein is 3,4-dihydroxy-2-butanone 4-phosphate synthase.